The chain runs to 358 residues: Vanillin synthase (358 aa).

An N-terminal signal peptide occupies residues 1 to 21 (MARLLLLLVGVLIACAAGARA). Positions 22 to 140 (GSEFLAEDNP…RGNHKLTSAI (119 aa)) are cleaved as a propeptide — activation peptide. An N-linked (GlcNAc...) asparagine glycan is attached at N125. Intrachain disulfides connect C162–C205 and C196–C238. C165 is an active-site residue. N-linked (GlcNAc...) asparagine glycosylation is present at N254. C296 and C346 form a disulfide bridge. Catalysis depends on residues H305 and N325.

Belongs to the peptidase C1 family.

The catalysed reaction is (E)-ferulate + H2O = vanillin + acetate. It carries out the reaction 4-O-beta-D-glucosyl-trans-ferulate + H2O = 4-O-beta-D-glucosyl-vanillin + acetate. The protein operates within aromatic compound metabolism; phenylpropanoid biosynthesis. Its function is as follows. Involved in the biosynthesis of vanillin and derivative natural products. Catalyzes the double carbon bond cleavage of ferulic acid to vanillin and of respective glucosides. This chain is Vanillin synthase, found in Glechoma hederacea (Ground-ivy).